We begin with the raw amino-acid sequence, 1682 residues long: Collagen alpha-4(IV) chain (1682 aa).

The signal sequence occupies residues 1-32 (MRCFFRWTKSFVTAPWSLIFILFTIQYEYGSG). The segment at 31 to 56 (SGKKYGGPCGGRNCSVCQCFPEKGSR) is 7S domain. Asn43 is a glycosylation site (N-linked (GlcNAc...) asparagine). Disordered stretches follow at residues 56–255 (RGHP…VQPP) and 379–1453 (PGPP…FGPG). The tract at residues 57–1451 (GHPGPLGPQG…TGDPGPKGFG (1395 aa)) is triple-helical region. The Cell attachment site signature appears at 86–88 (RGD). Low complexity predominate over residues 103–116 (PTGVPGFPGVDGVP). Asn134 is a glycosylation site (N-linked (GlcNAc...) asparagine). 2 short sequence motifs (cell attachment site) span residues 137 to 139 (RGD) and 181 to 183 (RGD). Positions 396-410 (MGPPGPPGVPGPPGF) are enriched in pro residues. The span at 411–426 (PGEAGVPGRLDCAPGK) shows a compositional bias: low complexity. Positions 487–500 (PPGPMGPPGPPGPP) are enriched in pro residues. Basic and acidic residues predominate over residues 578-601 (DGGDGRPGERGDPGPRGDHKDAAP). 2 consecutive short sequence motifs (cell attachment site) follow at residues 587–589 (RGD) and 593–595 (RGD). A compositionally biased stretch (pro residues) spans 609–621 (LPGPPGRTGPEGP). Low complexity predominate over residues 632–647 (QRGLPGEPGRPGTRGF). A glycan (N-linked (GlcNAc...) asparagine) is linked at Asn661. The segment covering 665-682 (PGKPGLPGLDGPPGLKGF) has biased composition (low complexity). The Cell attachment site signature appears at 716–718 (RGD). 2 stretches are compositionally biased toward low complexity: residues 742–758 (PGKD…AFGD) and 857–902 (PAGM…LPGL). 2 stretches are compositionally biased toward basic and acidic residues: residues 911-929 (ERGK…EVGE) and 938-950 (DLGE…DRGL). Gly residues predominate over residues 969-978 (GPPGDGGFSG). 2 consecutive short sequence motifs (cell attachment site) follow at residues 980-982 (RGD) and 992-994 (RGD). Low complexity predominate over residues 998 to 1010 (DGLPGLHRGQPGI). The segment covering 1011–1025 (DGPPGPPGPPGPPGS) has biased composition (pro residues). A compositionally biased stretch (low complexity) spans 1034 to 1044 (FPGFPGDQGDP). Positions 1144 to 1146 (RGD) match the Cell attachment site motif. 5 stretches are compositionally biased toward pro residues: residues 1223–1235 (PGPP…PGPA), 1248–1272 (DPGP…PPGS), 1289–1304 (PGPP…PGCQ), 1340–1351 (PGPPGRKGPVGP), and 1435–1444 (APGPPGPTGD). The 226-residue stretch at 1457–1682 (GFLLVLHSQT…SRCQVCMKHS (226 aa)) folds into the Collagen IV NC1 domain. Cystine bridges form between Cys1472–Cys1561, Cys1505–Cys1558, Cys1517–Cys1523, Cys1580–Cys1678, Cys1614–Cys1675, and Cys1626–Cys1633.

The protein belongs to the type IV collagen family. There are six type IV collagen isoforms, alpha 1(IV)-alpha 6(IV), each of which can form a triple helix structure with 2 other chains to generate type IV collagen network. The alpha 3(IV) chain forms a triple helical protomer with alpha 4(IV) and alpha 5(IV); this triple helical structure dimerizes through NC1-NC1 domain interactions such that the alpha 3(IV), alpha 4(IV) and alpha 5(IV) chains of one protomer connect with the alpha 5(IV), alpha 4(IV) and alpha 3(IV) chains of the opposite protomer, respectively. Associates with LAMB2 at the neuromuscular junction and in GBM. In terms of processing, prolines at the third position of the tripeptide repeating unit (G-X-Y) are hydroxylated in some or all of the chains. Type IV collagens contain numerous cysteine residues which are involved in inter- and intramolecular disulfide bonding. 12 of these, located in the NC1 domain, are conserved in all known type IV collagens. Post-translationally, the trimeric structure of the NC1 domains is stabilized by covalent bonds between Lys and Met residues. In terms of tissue distribution, expressed in Bruch's membrane, outer plexiform layer, inner nuclear layer, inner plexiform layer, ganglion cell layer, inner limiting membrane and around the blood vessels of the retina (at protein level). Highly expressed in kidney and lung. Detected at lower levels in heart, muscle and skin.

The protein resides in the secreted. It is found in the extracellular space. It localises to the extracellular matrix. Its subcellular location is the basement membrane. Functionally, type IV collagen is the major structural component of glomerular basement membranes (GBM), forming a 'chicken-wire' meshwork together with laminins, proteoglycans and entactin/nidogen. The sequence is that of Collagen alpha-4(IV) chain from Mus musculus (Mouse).